The chain runs to 512 residues: Photosystem II CP47 reaction center protein (512 aa).

Transmembrane regions (helical) follow at residues 21–36 (AVHLMHTALVSGWAGS), 101–115 (IVLSGLLFLAAIWHW), 140–156 (GIHLFLSGVLCFAFGAF), 203–218 (IAAGILGILAGLFHLS), 237–252 (VLSSSIAAVFFAAFVV), and 457–472 (TFALLFFFGHIWHGAR).

It belongs to the PsbB/PsbC family. PsbB subfamily. PSII is composed of 1 copy each of membrane proteins PsbA, PsbB, PsbC, PsbD, PsbE, PsbF, PsbH, PsbI, PsbJ, PsbK, PsbL, PsbM, PsbT, PsbX, PsbY, PsbZ, Psb30/Ycf12, at least 3 peripheral proteins of the oxygen-evolving complex and a large number of cofactors. It forms dimeric complexes. It depends on Binds multiple chlorophylls. PSII binds additional chlorophylls, carotenoids and specific lipids. as a cofactor.

Its subcellular location is the plastid. It is found in the chloroplast thylakoid membrane. In terms of biological role, one of the components of the core complex of photosystem II (PSII). It binds chlorophyll and helps catalyze the primary light-induced photochemical processes of PSII. PSII is a light-driven water:plastoquinone oxidoreductase, using light energy to abstract electrons from H(2)O, generating O(2) and a proton gradient subsequently used for ATP formation. This chain is Photosystem II CP47 reaction center protein, found in Physcomitrium patens (Spreading-leaved earth moss).